The sequence spans 285 residues: Eukaryotic translation initiation factor 2 subunit beta (285 aa).

A disordered region spans residues 30 to 69 (DAAVNGKENGSGDDLFAGLKKKKKKSKSVSADAEAEKEPT). Serine 40 carries the phosphoserine modification. Threonine 69 is modified (phosphothreonine). Phosphoserine occurs at positions 80, 92, and 112. Threonine 116 is subject to Phosphothreonine. At serine 118 the chain carries Phosphoserine. The C4-type zinc-finger motif lies at 236-262 (CKTCKSINTELKREQSNRLFFMVCKSC).

It belongs to the eIF-2-beta/eIF-5 family. Eukaryotic translation initiation factor 2 eIF2 is a heterotrimeric complex composed of an alpha, a beta and a gamma subunit. The factors eIF-1, eIF-2, eIF-3, TIF5/eIF-5 and methionyl-tRNAi form a multifactor complex (MFC) that may bind to the 40S ribosome. Interacts with GCD6. Interacts with GCD1. Interacts with TIF5/eIF-5. Interacts with CDC123.

The protein resides in the cytoplasm. It localises to the cytosol. Functionally, component of the eIF2 complex that functions in the early steps of protein synthesis by forming a ternary complex with GTP and initiator tRNA. This complex binds to a 40S ribosomal subunit, followed by mRNA binding to form a 43S pre-initiation complex (43S PIC). Junction of the 60S ribosomal subunit to form the 80S initiation complex is preceded by hydrolysis of the GTP bound to eIF2 and release of an eIF2-GDP binary complex. In order for eIF2 to recycle and catalyze another round of initiation, the GDP bound to eIF2 must exchange with GTP by way of a reaction catalyzed by eIF2B. In Saccharomyces cerevisiae (strain ATCC 204508 / S288c) (Baker's yeast), this protein is Eukaryotic translation initiation factor 2 subunit beta (SUI3).